Consider the following 235-residue polypeptide: Isopentenyl-diphosphate Delta-isomerase I (235 aa).

Residue Lys38 coordinates substrate. Positions 42 and 54 each coordinate Mg(2+). In terms of domain architecture, Nudix hydrolase spans 52-204; that stretch reads LLHRAFSVFL…GLKLSPWFRL (153 aa). Substrate contacts are provided by Arg73 and Lys77. Cys89 is an active-site residue. Ser90 contacts substrate. Residues Glu149 and Glu151 each coordinate Mg(2+). Glu151 is a catalytic residue.

Belongs to the IPP isomerase type 1 family. The cofactor is Mg(2+).

It catalyses the reaction isopentenyl diphosphate = dimethylallyl diphosphate. It functions in the pathway isoprenoid biosynthesis; dimethylallyl diphosphate biosynthesis; dimethylallyl diphosphate from isopentenyl diphosphate: step 1/1. Its pathway is porphyrin-containing compound metabolism; chlorophyll biosynthesis. In terms of biological role, catalyzes the 1,3-allylic rearrangement of the homoallylic substrate isopentenyl (IPP) to its highly electrophilic allylic isomer, dimethylallyl diphosphate (DMAPP). This is Isopentenyl-diphosphate Delta-isomerase I (IPI1) from Camptotheca acuminata (Happy tree).